The chain runs to 126 residues: MLITVLNVALGGAIGASCRYLIGVGVLRALGPTGFPVGVLGVNILGSALMGAFVVLAAHKGLTHLSPFVMTGVLGGFTTFSAFSLEAVTLFERGAYGQAALYIGLSAGLSIAALALGMMAARGVLT.

The next 4 membrane-spanning stretches (helical) occupy residues Leu-2–Ile-22, Val-37–Ala-57, Leu-65–Leu-85, and Ala-99–Met-119. The Na(+) site is built by Gly-75 and Thr-78.

It belongs to the fluoride channel Fluc/FEX (TC 1.A.43) family.

The protein resides in the cell inner membrane. It carries out the reaction fluoride(in) = fluoride(out). Its activity is regulated as follows. Na(+) is not transported, but it plays an essential structural role and its presence is essential for fluoride channel function. Functionally, fluoride-specific ion channel. Important for reducing fluoride concentration in the cell, thus reducing its toxicity. This Ruegeria sp. (strain TM1040) (Silicibacter sp.) protein is Fluoride-specific ion channel FluC.